The following is a 396-amino-acid chain: Elongation factor Tu 1 (396 aa).

One can recognise a tr-type G domain in the interval 10–206 (KPHVNVGTIG…ALDTYIPTPE (197 aa)). The tract at residues 19-26 (GHVDHGKT) is G1. GTP is bound at residue 19–26 (GHVDHGKT). Thr26 serves as a coordination point for Mg(2+). The segment at 60 to 64 (GITIN) is G2. Residues 81–84 (DCPG) form a G3 region. Residues 81–85 (DCPGH) and 136–139 (NKCD) each bind GTP. The segment at 136-139 (NKCD) is G4. The segment at 174–176 (SAK) is G5.

It belongs to the TRAFAC class translation factor GTPase superfamily. Classic translation factor GTPase family. EF-Tu/EF-1A subfamily. Monomer.

The protein localises to the cytoplasm. The catalysed reaction is GTP + H2O = GDP + phosphate + H(+). Its function is as follows. GTP hydrolase that promotes the GTP-dependent binding of aminoacyl-tRNA to the A-site of ribosomes during protein biosynthesis. The chain is Elongation factor Tu 1 from Acidovorax sp. (strain JS42).